The primary structure comprises 476 residues: Ribosomal protein uS12 methylthiotransferase RimO (476 aa).

An MTTase N-terminal domain is found at 33–143; the sequence is NRIGFVSLGC…VLKHVHKYVP (111 aa). Residues C42, C78, C107, C175, C179, and C182 each contribute to the [4Fe-4S] cluster site. Residues 161–398 form the Radical SAM core domain; sequence LTPKHYAYLK…MEVQAEISAE (238 aa). A TRAM domain is found at 401–467; sequence ARFVGRTMDI…EHDLWAELVD (67 aa).

Belongs to the methylthiotransferase family. RimO subfamily. It depends on [4Fe-4S] cluster as a cofactor.

The protein localises to the cytoplasm. The enzyme catalyses L-aspartate(89)-[ribosomal protein uS12]-hydrogen + (sulfur carrier)-SH + AH2 + 2 S-adenosyl-L-methionine = 3-methylsulfanyl-L-aspartate(89)-[ribosomal protein uS12]-hydrogen + (sulfur carrier)-H + 5'-deoxyadenosine + L-methionine + A + S-adenosyl-L-homocysteine + 2 H(+). In terms of biological role, catalyzes the methylthiolation of an aspartic acid residue of ribosomal protein uS12. This chain is Ribosomal protein uS12 methylthiotransferase RimO, found in Shewanella sp. (strain MR-4).